An 870-amino-acid polypeptide reads, in one-letter code: S-linalool synthase (870 aa).

Asp-547, Asp-551, Asn-689, Ser-693, and Glu-697 together coordinate Mg(2+). Residues 547–551 (DDFFD) carry the DDXXD motif motif.

The protein belongs to the terpene synthase family. Requires Mg(2+) as cofactor. The cofactor is Mn(2+). In terms of tissue distribution, highly expressed in cells of the transmitting tract of the stigma and style and in the epidermal cells of petals, as well as in stamens.

The catalysed reaction is (2E)-geranyl diphosphate + H2O = (S)-linalool + diphosphate. Involved in the biosynthesis of the acyclic monoterpene S-linalool, a major component of the strong sweet scent of the C.breweri flowers. In Clarkia breweri (Fairy fans), this protein is S-linalool synthase (LIS).